The chain runs to 389 residues: S-adenosylmethionine synthase (389 aa).

Position 17 (His-17) interacts with ATP. Asp-19 contacts Mg(2+). Residue Glu-45 coordinates K(+). L-methionine contacts are provided by Glu-58 and Gln-101. Residues 101–111 (QSPDISQGVDG) form a flexible loop region. ATP is bound by residues 170–172 (DSK), 237–238 (RF), Asp-246, 252–253 (RK), Ala-269, and Lys-273. Asp-246 provides a ligand contact to L-methionine. Lys-277 serves as a coordination point for L-methionine.

This sequence belongs to the AdoMet synthase family. Homotetramer; dimer of dimers. The cofactor is Mg(2+). Requires K(+) as cofactor.

The protein localises to the cytoplasm. The enzyme catalyses L-methionine + ATP + H2O = S-adenosyl-L-methionine + phosphate + diphosphate. The protein operates within amino-acid biosynthesis; S-adenosyl-L-methionine biosynthesis; S-adenosyl-L-methionine from L-methionine: step 1/1. Its function is as follows. Catalyzes the formation of S-adenosylmethionine (AdoMet) from methionine and ATP. The overall synthetic reaction is composed of two sequential steps, AdoMet formation and the subsequent tripolyphosphate hydrolysis which occurs prior to release of AdoMet from the enzyme. This Treponema denticola (strain ATCC 35405 / DSM 14222 / CIP 103919 / JCM 8153 / KCTC 15104) protein is S-adenosylmethionine synthase.